Here is a 252-residue protein sequence, read N- to C-terminus: Oil body-associated protein 2A (252 aa).

The disordered stretch occupies residues 1–31 (MASSDGKPLPTPASVGGGGGSSTAPPGQPTT). Low complexity predominate over residues 22-31 (STAPPGQPTT).

The protein belongs to the OBAP family.

The protein is Oil body-associated protein 2A of Zea mays (Maize).